The sequence spans 484 residues: MPSETAVPPPHPIPPDGGWGWVVVGAAFISIGFSYAFPKAVTVFFKDIQQIFQASYSEIAWISSIMLAVMYAGGPISSVLVNNYGSRPVVIIGGLLCCTGMILASFSNSVLELYLTIGFIGGLGLAFNLQPALTIIGKYFYRRRPMANGLAMAGSPVFLSSLAPFNQYLFNSYGWKGSFLILGGIFLHSCVAGCLMRPVQTSPRKSKSKSKVGSRQDGSMKKASKVSTAEKINRFLDFSLFKHRGFLIYLSGNVIMFLGFFAPIIFLAPYAKDKGVDEYNAALLLSVMAFVDMFARPTGGLIANSKLIRPRIQYFFSFAIVFTGICHLLCPLADTYPALVVYSIFFGYGFGSVSSVLFETLMDLVGPARFSSAVGLATIVECCPVLLGPPLAGKLVDKTKDYKYMYIASGTIVVISGIYLFIGNAINYRLLAKERKREKARKKKSATHPSRESEALSRSKQDDVSVKVSNPHNSPSDRERESNI.

Over 1–16 (MPSETAVPPPHPIPPD) the chain is Cytoplasmic. Residues 17-37 (GGWGWVVVGAAFISIGFSYAF) traverse the membrane as a helical segment. At 38-60 (PKAVTVFFKDIQQIFQASYSEIA) the chain is on the extracellular side. Residues 61–81 (WISSIMLAVMYAGGPISSVLV) form a helical membrane-spanning segment. Topologically, residues 82-87 (NNYGSR) are cytoplasmic. A helical transmembrane segment spans residues 88-108 (PVVIIGGLLCCTGMILASFSN). Over 109–116 (SVLELYLT) the chain is Extracellular. The helical transmembrane segment at 117 to 137 (IGFIGGLGLAFNLQPALTIIG) threads the bilayer. Residues 138–144 (KYFYRRR) are Cytoplasmic-facing. The chain crosses the membrane as a helical span at residues 145 to 165 (PMANGLAMAGSPVFLSSLAPF). Residues 166–174 (NQYLFNSYG) are Extracellular-facing. The helical transmembrane segment at 175 to 195 (WKGSFLILGGIFLHSCVAGCL) threads the bilayer. Residues 196-245 (MRPVQTSPRKSKSKSKVGSRQDGSMKKASKVSTAEKINRFLDFSLFKHRG) lie on the Cytoplasmic side of the membrane. Positions 201-224 (TSPRKSKSKSKVGSRQDGSMKKAS) are disordered. A helical membrane pass occupies residues 246–266 (FLIYLSGNVIMFLGFFAPIIF). The Extracellular segment spans residues 267–282 (LAPYAKDKGVDEYNAA). A helical transmembrane segment spans residues 283 to 303 (LLLSVMAFVDMFARPTGGLIA). Residues 304-311 (NSKLIRPR) are Cytoplasmic-facing. The chain crosses the membrane as a helical span at residues 312-332 (IQYFFSFAIVFTGICHLLCPL). The Extracellular segment spans residues 333–337 (ADTYP). The chain crosses the membrane as a helical span at residues 338–358 (ALVVYSIFFGYGFGSVSSVLF). The Cytoplasmic segment spans residues 359 to 372 (ETLMDLVGPARFSS). Residues 373–393 (AVGLATIVECCPVLLGPPLAG) form a helical membrane-spanning segment. The Extracellular portion of the chain corresponds to 394-405 (KLVDKTKDYKYM). The chain crosses the membrane as a helical span at residues 406–426 (YIASGTIVVISGIYLFIGNAI). Residues 427-484 (NYRLLAKERKREKARKKKSATHPSRESEALSRSKQDDVSVKVSNPHNSPSDRERESNI) are Cytoplasmic-facing. The tract at residues 437 to 484 (REKARKKKSATHPSRESEALSRSKQDDVSVKVSNPHNSPSDRERESNI) is disordered. 2 stretches are compositionally biased toward basic and acidic residues: residues 449-465 (PSRE…DDVS) and 475-484 (PSDRERESNI).

Belongs to the major facilitator superfamily. Monocarboxylate porter (TC 2.A.1.13) family. Homodimer. Interacts with GRID2IP. Interacts with EMB; interaction mediates SLC16A7 targeting to the plasma membrane. Interacts with isoform 2 of BSG. In terms of tissue distribution, abundant on the surface of hepatocytes. Present on parietal cells of the oxyntic gland of the stomach, on the basolateral surface of epithelial cells in the collecting ducts of the kidney, on sperm tails throughout the epididymis. Expressed in mitochondria-rich skeletal muscle fibers and cardiac myocytes (at protein level).

Its subcellular location is the cell membrane. The protein resides in the basolateral cell membrane. It localises to the cytoplasm. The enzyme catalyses pyruvate(out) + H(+)(out) = pyruvate(in) + H(+)(in). The catalysed reaction is 3-methyl-2-oxobutanoate(out) + H(+)(out) = 3-methyl-2-oxobutanoate(in) + H(+)(in). It catalyses the reaction (S)-lactate(in) + H(+)(in) = (S)-lactate(out) + H(+)(out). It carries out the reaction acetoacetate(out) + H(+)(out) = acetoacetate(in) + H(+)(in). The enzyme catalyses (R)-3-hydroxybutanoate(out) + H(+)(out) = (R)-3-hydroxybutanoate(in) + H(+)(in). The catalysed reaction is 4-methyl-2-oxopentanoate(out) + H(+)(out) = 4-methyl-2-oxopentanoate(in) + H(+)(in). It catalyses the reaction (S)-3-hydroxybutanoate(out) + H(+)(out) = (S)-3-hydroxybutanoate(in) + H(+)(in). With respect to regulation, transport activity exhibits steep dependence on substrate concentration. Substrate concentration sensitivity of SLC16A7 arises from the strong inter-subunit cooperativity of the SLC16A7 dimer during transport. Inhibited by AR-C155858. In terms of biological role, proton-coupled monocarboxylate symporter. Catalyzes the rapid transport across the plasma membrane of monocarboxylates such as L-lactate, pyruvate and ketone bodies, acetoacetate, beta-hydroxybutyrate and acetate. Dimerization is functionally required and both subunits work cooperatively in transporting substrate. The polypeptide is Monocarboxylate transporter 2 (SLC16A7) (Mesocricetus auratus (Golden hamster)).